A 70-amino-acid polypeptide reads, in one-letter code: Large ribosomal subunit protein bL31 (70 aa).

Cys16, Cys18, Cys38, and Cys41 together coordinate Zn(2+).

Belongs to the bacterial ribosomal protein bL31 family. Type A subfamily. In terms of assembly, part of the 50S ribosomal subunit. It depends on Zn(2+) as a cofactor.

Its function is as follows. Binds the 23S rRNA. The polypeptide is Large ribosomal subunit protein bL31 (Bifidobacterium adolescentis (strain ATCC 15703 / DSM 20083 / NCTC 11814 / E194a)).